The primary structure comprises 440 residues: Proton extrusion protein PxcA (440 aa).

A run of 4 helical transmembrane segments spans residues 222–242 (FVLT…TFFL), 316–336 (NAIA…LVLV), 352–374 (IVYG…MFVG), and 400–420 (FNFL…KYWI).

This sequence belongs to the CemA family.

Its subcellular location is the cell inner membrane. Functionally, required for H(+) efflux immediately after light irradiation to form a rapid H(+) concentration gradient across the thylakoid membranes. Together with PxcL, contributes to transient H(+) uptake following dark to light transition. Involved in light-induced Na(+)-dependent proton extrusion. Also seems to be involved in CO(2) transport. This chain is Proton extrusion protein PxcA, found in Synechocystis sp. (strain ATCC 27184 / PCC 6803 / Kazusa).